A 350-amino-acid polypeptide reads, in one-letter code: UDP-glucose 4-epimerase 2 (350 aa).

Residues 12–14, 33–37, 63–64, F85, and K89 each bind NAD(+); these read GYI, DNYDN, and DL. 129 to 131 lines the substrate pocket; the sequence is SAT. The Proton acceptor role is filled by Y153. NAD(+)-binding residues include K157 and Y181. Substrate-binding positions include 181–183, 202–204, 220–222, R235, and 297–300; these read YFN, NNL, TVF, and RPGD.

Belongs to the NAD(P)-dependent epimerase/dehydratase family. Forms homodimers and heterodimers. Requires NAD(+) as cofactor. Widely expressed. Most highly expressed in stems and flowers.

It is found in the cytoplasm. It catalyses the reaction UDP-alpha-D-glucose = UDP-alpha-D-galactose. The protein operates within carbohydrate metabolism; galactose metabolism. Enhanced activity by NaCl. Enhanced activity by NAD(+). Strongly inhibited by UDP. Functionally, catalyzes the interconversion between UDP-glucose and UDP-galactose. Cooperates with UGE3 in pollen development and with UGE4 in cell wall carbohydrate biosynthesis and growth. In Arabidopsis thaliana (Mouse-ear cress), this protein is UDP-glucose 4-epimerase 2.